Consider the following 760-residue polypeptide: Striatin-4 (760 aa).

The disordered stretch occupies residues 1 to 65 (MMEERAAAAV…PTAGPEPLSL (65 aa)). The segment covering 7-35 (AAAVASAASSCRPLGSGTAPNPTAAAPAS) has biased composition (low complexity). Positions 43-54 (PVGKGGGGGGSP) are enriched in gly residues. Position 53 is a phosphoserine (serine 53). The stretch at 69 to 136 (LHFIQHEWAR…QERAKYHKLK (68 aa)) forms a coiled coil. Residues 71–79 (FIQHEWARF) are caveolin-binding. Residues 165–182 (ENSPLVWKEGRQLLRQYL) form a calmodulin-binding region. A phosphoserine mark is found at serine 206, serine 223, and serine 276. Disordered regions lie at residues 210-233 (NGAG…SGGE) and 272-346 (EDED…PHEL). 2 stretches are compositionally biased toward acidic residues: residues 272–283 (EDEDSDEDDELD) and 302–317 (EMED…DAIN). The span at 332–346 (PDPRRCTSEGNPHEL) shows a compositional bias: basic and acidic residues. WD repeat units follow at residues 443–482 (SHYD…TAKK), 496–535 (AHRG…MDPY), 549–588 (GHGD…PSCL), 595–635 (GEHG…ALLT), 642–681 (SGPA…SVHS), 684–723 (AHLD…CVQE), and 730–759 (KHEE…AKVF).

This sequence belongs to the WD repeat striatin family. As to quaternary structure, part of the core of STRIPAK complexes composed of PP2A catalytic and scaffolding subunits, the striatins (PP2A regulatory subunits), the striatin-associated proteins MOB4, STRIP1 and STRIP2, PDCD10 and members of the STE20 kinases, such as STK24 and STK26. Interacts with CTTNBP2NL. Mainly expressed in brain but is also expressed at low levels in the kidney.

Its subcellular location is the cytoplasm. The protein resides in the membrane. It localises to the cell projection. It is found in the dendritic spine. Calmodulin-binding scaffolding protein which is the center of the striatin-interacting phosphatase and kinase (STRIPAK) complexes. STRIPAK complexes have critical roles in protein (de)phosphorylation and are regulators of multiple signaling pathways including Hippo, MAPK, nuclear receptor and cytoskeleton remodeling. Different types of STRIPAK complexes are involved in a variety of biological processes such as cell growth, differentiation, apoptosis, metabolism and immune regulation. Key regulator of the expanded Hippo signaling pathway by interacting and allowing the inhibition of MAP4K kinases by the STRIPAK complex. The protein is Striatin-4 (Strn4) of Mus musculus (Mouse).